The following is a 281-amino-acid chain: Insulin-like growth factor-binding protein 7 (281 aa).

Residues 1-25 (MERPPRALLLGAAGLLLLLLPLSSS) form the signal peptide. Residues 27–113 (SSDACGPCVP…PATLAVCVCK (87 aa)) form the IGFBP N-terminal domain. Disulfide bonds link C31–C56, C34–C58, C39–C59, C47–C62, C70–C86, C80–C110, C112–C130, and C119–C155. The Kazal-like domain occupies 98 to 157 (GAAAGGPATLAVCVCKSRYPVCGSNGITYPSGCQLRAASLRAESRGEKAITQVSKGTCEQ). The Ig-like C2-type domain occupies 159-263 (PSIVTPPKDI…GQASAAAKIT (105 aa)). Residue N170 is glycosylated (N-linked (GlcNAc...) asparagine). C180 and C247 are oxidised to a cystine. S238 is subject to Phosphoserine.

May interact with VPS24/CHMP3; the relevance of such interaction however remains unclear. Interacts with CD93; this interaction plays a role in endothelial cells angiogenesis. In terms of processing, N-glycosylated. As to expression, expressed at high levels in lung, kidney, small intestine, testis and uterus and at moderate levels in liver.

Its subcellular location is the secreted. Functionally, binds IGF1 and IGF2 with a relatively low affinity. Stimulates prostacyclin (PGI2) production. Stimulates cell adhesion. Acts as a ligand for CD93 to play a role in angiogenesis. This chain is Insulin-like growth factor-binding protein 7 (Igfbp7), found in Mus musculus (Mouse).